The primary structure comprises 65 residues: Large ribosomal subunit protein uL29 (65 aa).

It belongs to the universal ribosomal protein uL29 family.

This chain is Large ribosomal subunit protein uL29, found in Brevibacillus brevis (strain 47 / JCM 6285 / NBRC 100599).